The following is a 336-amino-acid chain: GTPase Obg (336 aa).

One can recognise an Obg domain in the interval 1–159 (MKFLDETKVY…KTIWLRLKLI (159 aa)). The OBG-type G domain occupies 160–327 (ADAGLVGLPN…ALRALRSVIA (168 aa)). GTP-binding positions include 166–173 (GLPNAGKS), 191–195 (FTTLH), 212–215 (DIPG), 279–282 (SQID), and 308–310 (SAV). Residues S173 and T193 each contribute to the Mg(2+) site.

Belongs to the TRAFAC class OBG-HflX-like GTPase superfamily. OBG GTPase family. Monomer. Requires Mg(2+) as cofactor.

The protein localises to the cytoplasm. Its function is as follows. An essential GTPase which binds GTP, GDP and possibly (p)ppGpp with moderate affinity, with high nucleotide exchange rates and a fairly low GTP hydrolysis rate. Plays a role in control of the cell cycle, stress response, ribosome biogenesis and in those bacteria that undergo differentiation, in morphogenesis control. The protein is GTPase Obg of Rhizobium meliloti (strain 1021) (Ensifer meliloti).